Reading from the N-terminus, the 403-residue chain is 26S proteasome regulatory subunit 8 homolog (403 aa).

Residue 186-193 (GPPGTGKT) participates in ATP binding.

It belongs to the AAA ATPase family.

Its subcellular location is the cytoplasm. It is found in the nucleus. The 26S proteasome is involved in the ATP-dependent degradation of ubiquitinated proteins. The regulatory (or ATPase) complex confers ATP dependency and substrate specificity to the 26S complex. This chain is 26S proteasome regulatory subunit 8 homolog (let1), found in Schizosaccharomyces pombe (strain 972 / ATCC 24843) (Fission yeast).